The sequence spans 233 residues: Ubiquitin carboxyl-terminal hydrolase isozyme L4 (233 aa).

The region spanning 5–232 is the UCH catalytic domain; the sequence is RWLPLEANPE…LRFNAIALSA (228 aa). The segment at 8 to 13 is interaction with ubiquitin; sequence PLEANP. The active-site Nucleophile is the Cys95. A Phosphoserine modification is found at Ser133. His172 (proton donor) is an active-site residue. An interaction with ubiquitin region spans residues 222–227; that stretch reads ELRFNA.

This sequence belongs to the peptidase C12 family. In terms of tissue distribution, expressed in various tissues at low level.

The protein localises to the cytoplasm. The enzyme catalyses Thiol-dependent hydrolysis of ester, thioester, amide, peptide and isopeptide bonds formed by the C-terminal Gly of ubiquitin (a 76-residue protein attached to proteins as an intracellular targeting signal).. Its function is as follows. Ubiquitin-protein hydrolase is involved both in the processing of ubiquitin precursors and of ubiquitinated proteins. This enzyme is a thiol protease that recognizes and hydrolyzes a peptide bond at the C-terminal glycine of ubiquitin. The polypeptide is Ubiquitin carboxyl-terminal hydrolase isozyme L4 (Uchl4) (Mus musculus (Mouse)).